Reading from the N-terminus, the 733-residue chain is Alpha,alpha-trehalose-phosphate synthase [UDP-forming] A (733 aa).

This sequence in the N-terminal section; belongs to the glycosyltransferase 20 family. The protein in the C-terminal section; belongs to the trehalose phosphatase family.

The enzyme catalyses D-glucose 6-phosphate + UDP-alpha-D-glucose = alpha,alpha-trehalose 6-phosphate + UDP + H(+). In terms of biological role, synthesizes trehalose 6-phosphate, the precursor for the production of trehalose, the main carbohydrate storage reserve of the dormant spore. Trehalose accumulates in both prestalk and prespore cells and then is rapidly metabolized during terminal differentiation of stalk cells, while being stored in spores, where it serves as the principal energy and carbon source for germination. This chain is Alpha,alpha-trehalose-phosphate synthase [UDP-forming] A (tpsA), found in Dictyostelium discoideum (Social amoeba).